The following is a 273-amino-acid chain: HMP-PP phosphatase (273 aa).

The active-site Nucleophile is the Asp-8. Asp-8, Asp-10, and Asp-212 together coordinate Mg(2+).

The protein belongs to the HAD-like hydrolase superfamily. Cof family. Requires Mg(2+) as cofactor.

The catalysed reaction is 4-amino-2-methyl-5-(diphosphooxymethyl)pyrimidine + H2O = 4-amino-2-methyl-5-(phosphooxymethyl)pyrimidine + phosphate + H(+). Catalyzes the hydrolysis of 4-amino-2-methyl-5-hydroxymethylpyrimidine pyrophosphate (HMP-PP) to 4-amino-2-methyl-5-hydroxymethylpyrimidine phosphate (HMP-P). This Yersinia pestis bv. Antiqua (strain Antiqua) protein is HMP-PP phosphatase.